Reading from the N-terminus, the 271-residue chain is Phosphatidylinositol transfer protein alpha isoform (271 aa).

A 1,2-diacyl-sn-glycero-3-phospho-(1D-myo-inositol) contacts are provided by T59, K61, E86, N90, T97, and K195. Residue K216 is modified to N6-acetyllysine. A compositionally biased stretch (basic and acidic residues) spans 251 to 264 (TKRQLDEMRQKDPV). The interval 251-271 (TKRQLDEMRQKDPVKGMTADD) is disordered.

It belongs to the PtdIns transfer protein family. PI transfer class I subfamily. Post-translationally, phosphorylated by PKC in a calcium and phosphatidylserine-dependent manner.

It is found in the cytoplasm. The protein localises to the nucleus. It catalyses the reaction a 1,2-diacyl-sn-glycero-3-phosphocholine(in) = a 1,2-diacyl-sn-glycero-3-phosphocholine(out). It carries out the reaction a 1,2-diacyl-sn-glycero-3-phospho-(1D-myo-inositol)(in) = a 1,2-diacyl-sn-glycero-3-phospho-(1D-myo-inositol)(out). Catalyzes the transfer of phosphatidylinositol (PI) and phosphatidylcholine (PC) between membranes. Shows a preference for PI and PC containing shorter saturated or monosaturated acyl chains at the sn-1 and sn-2 positions. Preference order for PC is C16:1 &gt; C16:0 &gt; C18:1 &gt; C18:0 &gt; C20:4 and for PI is C16:1 &gt; C16:0 &gt; C18:1 &gt; C18:0 &gt; C20:4 &gt; C20:3. The polypeptide is Phosphatidylinositol transfer protein alpha isoform (Pitpna) (Mus musculus (Mouse)).